The following is a 215-amino-acid chain: Protein LURP-one-related 16 (215 aa).

The N-myristoyl glycine moiety is linked to residue glycine 2.

This sequence belongs to the LOR family.

Its function is as follows. Might be related to the phospholipid scramblase and tubby-like superfamily of membrane tethered transcription factors. The chain is Protein LURP-one-related 16 from Arabidopsis thaliana (Mouse-ear cress).